Reading from the N-terminus, the 347-residue chain is Protein RecA (347 aa).

70-77 contributes to the ATP binding site; that stretch reads GPESSGKT.

The protein belongs to the RecA family.

It localises to the cytoplasm. Functionally, can catalyze the hydrolysis of ATP in the presence of single-stranded DNA, the ATP-dependent uptake of single-stranded DNA by duplex DNA, and the ATP-dependent hybridization of homologous single-stranded DNAs. It interacts with LexA causing its activation and leading to its autocatalytic cleavage. In Ruegeria pomeroyi (strain ATCC 700808 / DSM 15171 / DSS-3) (Silicibacter pomeroyi), this protein is Protein RecA.